The sequence spans 226 residues: Ribosomal RNA small subunit methyltransferase G (226 aa).

S-adenosyl-L-methionine is bound by residues G95, L100, 146 to 147 (VE), and R159.

Belongs to the methyltransferase superfamily. RNA methyltransferase RsmG family.

It is found in the cytoplasm. It carries out the reaction guanosine(527) in 16S rRNA + S-adenosyl-L-methionine = N(7)-methylguanosine(527) in 16S rRNA + S-adenosyl-L-homocysteine. Its function is as follows. Specifically methylates the N7 position of guanine in position 527 of 16S rRNA. In Acidovorax sp. (strain JS42), this protein is Ribosomal RNA small subunit methyltransferase G.